Consider the following 60-residue polypeptide: uncharacterized protein (60 aa).

A signal peptide spans 1–21 (MNKLLKLFFITIIIYNNIAFA).

This is an uncharacterized protein from Rickettsia prowazekii (strain Madrid E).